The chain runs to 462 residues: Asparagine--tRNA ligase (462 aa).

The protein belongs to the class-II aminoacyl-tRNA synthetase family. As to quaternary structure, homodimer.

It is found in the cytoplasm. The enzyme catalyses tRNA(Asn) + L-asparagine + ATP = L-asparaginyl-tRNA(Asn) + AMP + diphosphate + H(+). The polypeptide is Asparagine--tRNA ligase (Borreliella afzelii (strain PKo) (Borrelia afzelii)).